The primary structure comprises 510 residues: MVTIRADEISKIIRERIEQYNTEVKIVNTGTVLQVGDGIARIYGLDEVMAGELVEFEEGTIGIALNLESKNVGVVLMGDGLMIQEGSSVKATGRIAQIPVSEAYLGRVINALAKPIDGRGEISASESRLIESPAPGIISRRSVYEPLQTGLIAIDSMIPIGRGQRELIIGDRQTGKTAVATDTILNQQGQNVICVYVAIGQKASSVAQVVNTLQERGAMEYTIVVAETADSPATLQYLAPYTGAALAEYFMYRERHTLIIYDDLSKQAQAYRQMSLLLRRPPGREAYPGDVFYLHSRLLERAAKLSSQLGEGSMTALPIVETQSGDVSAYIPTNVISITDGQIFLSADLFNAGIRPAINVGISVSRVGSAAQIKAMKQVAGKLKLELAQFAELEAFAQFSSDLDKATQNQLARGQRLRELLKQSQSAPLTVEEQIITIYTGTNGYLDSLEIGQVRKFLVELRAYLNTNKPQFKEIISSTKTFTGEAEVLLKEAIQEQMELFLLQEQVEKN.

Position 170–177 (170–177 (GDRQTGKT)) interacts with ATP.

Belongs to the ATPase alpha/beta chains family. As to quaternary structure, F-type ATPases have 2 components, CF(1) - the catalytic core - and CF(0) - the membrane proton channel. CF(1) has five subunits: alpha(3), beta(3), gamma(1), delta(1), epsilon(1). CF(0) has four main subunits: a, b, b' and c.

The protein resides in the plastid. Its subcellular location is the chloroplast thylakoid membrane. It carries out the reaction ATP + H2O + 4 H(+)(in) = ADP + phosphate + 5 H(+)(out). In terms of biological role, produces ATP from ADP in the presence of a proton gradient across the membrane. The alpha chain is a regulatory subunit. The polypeptide is ATP synthase subunit alpha, chloroplastic (Glycine max (Soybean)).